The primary structure comprises 371 residues: O-antigen chain mannosyltransferase C (371 aa).

This sequence belongs to the glycosyltransferase group 1 family. Glycosyltransferase 4 subfamily.

The catalysed reaction is N-acetyl-alpha-D-glucosaminyl-di-trans,octa-cis-undecaprenyl diphosphate + GDP-alpha-D-mannose = alpha-D-mannosyl-(1-&gt;3)-N-acetyl-alpha-D-glucosaminyl-di-trans,octa-cis-undecaprenyl diphosphate + GDP + H(+). It functions in the pathway bacterial outer membrane biogenesis; LPS O-antigen biosynthesis. Its function is as follows. Mannosyltransferase involved in the biosynthesis of the repeat unit of the lipopolysaccharide (LPS) O-antigen region. Catalyzes the transfer of a single alpha-(1-&gt;3)-linked mannose residue to the acceptor N-acetyl-glucosaminyl-diphospho-undecaprenol during the synthesis of the adapter region. This chain is O-antigen chain mannosyltransferase C, found in Escherichia coli.